A 232-amino-acid polypeptide reads, in one-letter code: Early E1A protein (232 aa).

An interaction with RB1 in competition with E2F1 region spans residues Pro40–Val48. Over residues Thr69–Leu84 the composition is skewed to low complexity. The interval Thr69–Thr97 is disordered. Pro residues predominate over residues Ser85–Thr97. An LXCXE motif, interaction with host RB1 motif is present at residues Leu107–Glu111. A zinc finger lies at Cys146–Cys164. Residues Ser175–Asn232 form a disordered region. A PXDLS motif, CTBP-binding motif is present at residues Pro222–Ser226. A Nuclear localization signal motif is present at residues Lys228 to Asn232.

The protein belongs to the adenoviridae E1A protein family. As to quaternary structure, interacts with host UBE2I; this interaction interferes with polySUMOylation. Interacts with host RB1; this interaction induces the aberrant dissociation of RB1-E2F1 complex thereby disrupting the activity of RB1 and activating E2F1-regulated genes. Interacts with host ATF7; the interaction enhances ATF7-mediated viral transactivation activity which requires the zinc binding domains of both proteins. Isoform early E1A 32 kDa protein and isoform early E1A 26 kDa protein interact (via N-terminus) with CUL1 and E3 ubiquitin ligase RBX1; these interactions inhibit RBX1-CUL1-dependent elongation reaction of ubiquitin chains and attenuate ubiquitination of SCF(FBXW7) target proteins. Interacts (via PXLXP motif) with host ZMYND11/BS69 (via MYND-type zinc finger); this interaction inhibits E1A mediated transactivation. Interacts with host EP300; this interaction stimulates the acetylation of RB1 by recruiting EP300 and RB1 into a multimeric-protein complex. Interacts with host CTBP1 and CTBP2; this interaction seems to potentiate viral replication. Interacts with host DCAF7. Interacts with host DYRK1A. Interacts with host KPNA4; this interaction allows E1A import into the host nucleus. Interacts with host EP400; this interaction stabilizes MYC. Interacts with host TBP protein; this interaction probably disrupts the TBP-TATA complex.

Its subcellular location is the host nucleus. Its function is as follows. Plays a role in viral genome replication by driving entry of quiescent cells into the cell cycle. Stimulation of progression from G1 to S phase allows the virus to efficiently use the cellular DNA replicating machinery to achieve viral genome replication. E1A protein has both transforming and trans-activating activities. Induces the disassembly of the E2F1 transcription factor from RB1 by direct competition for the same binding site on RB1, with subsequent transcriptional activation of E2F1-regulated S-phase genes and of the E2 region of the adenoviral genome. Release of E2F1 leads to the ARF-mediated inhibition of MDM2 and causes TP53/p53 to accumulate because it is not targeted for degradation by MDM2-mediated ubiquitination anymore. This increase in TP53, in turn, would arrest the cell proliferation and direct its death but this effect is counteracted by the viral protein E1B-55K. Inactivation of the ability of RB1 to arrest the cell cycle is critical for cellular transformation, uncontrolled cellular growth and proliferation induced by viral infection. Interaction with RBX1 and CUL1 inhibits ubiquitination of the proteins targeted by SCF(FBXW7) ubiquitin ligase complex, and may be linked to unregulated host cell proliferation. The tumorigenesis-restraining activity of E1A may be related to the disruption of the host CtBP-CtIP complex through the CtBP binding motif. The chain is Early E1A protein from Canine adenovirus serotype 2 (strain Toronto A 26-61) (CAdV-2).